The chain runs to 96 residues: MPNHSSAKKMVRVIKERTFSNRVRKSRVRNSVKKFLAVLESKGHLEDAVTAFRAAESNIHKCVNKGVMHRNTAARKVKSLAAKLKAFDLSLQGTST.

This sequence belongs to the bacterial ribosomal protein bS20 family.

Functionally, binds directly to 16S ribosomal RNA. The protein is Small ribosomal subunit protein bS20 of Anaplasma marginale (strain St. Maries).